Here is a 120-residue protein sequence, read N- to C-terminus: Basic phospholipase A2 Cc2-PLA2 (120 aa).

7 disulfide bridges follow: C26–C113, C28–C44, C43–C95, C49–C120, C50–C88, C57–C81, and C75–C86. Ca(2+) is bound by residues Y27, G29, and G31. H47 is a catalytic residue. D48 is a binding site for Ca(2+). D89 is an active-site residue.

The protein belongs to the phospholipase A2 family. Group II subfamily. D49 sub-subfamily. In terms of assembly, monomer. Ca(2+) is required as a cofactor. As to expression, expressed by the venom gland.

Its subcellular location is the secreted. It carries out the reaction a 1,2-diacyl-sn-glycero-3-phosphocholine + H2O = a 1-acyl-sn-glycero-3-phosphocholine + a fatty acid + H(+). Its function is as follows. Basic phospholipase A2 that inhibits ADP-, thrombin- and arachidonic acid-induced platelet aggregation. It also exhibits anticoagulant effects upon human plasma in vitro. It induces a high hemolytic activity reaching its maximum after 24 hours. It induces a marked elevation of plasmatic levels of interleukin-6 and -10, eosinophil peroxidase and complement lytic activities and it also provokes a drastic increase of lymphocytes, monocytes and neutrophils in peripheral blood accompanied by a rapid intense migration of neutrophils to the peritoneal cavity. PLA2 catalyzes the calcium-dependent hydrolysis of the 2-acyl groups in 3-sn-phosphoglycerides. The sequence is that of Basic phospholipase A2 Cc2-PLA2 from Cerastes cerastes (Horned desert viper).